The following is a 102-amino-acid chain: MSDQATTLRIKPLGDRILVKREEEEATARGGIILPDTAKKKQDRAEVLVLGTGKRTDDGTLLPFEVQVGDIILMDKYAGQEITIDDEEYVILQSSEIMAVLK.

Belongs to the GroES chaperonin family. As to quaternary structure, heptamer of 7 subunits arranged in a ring. Interacts with the chaperonin GroEL.

It localises to the cytoplasm. In terms of biological role, together with the chaperonin GroEL, plays an essential role in assisting protein folding. The GroEL-GroES system forms a nano-cage that allows encapsulation of the non-native substrate proteins and provides a physical environment optimized to promote and accelerate protein folding. GroES binds to the apical surface of the GroEL ring, thereby capping the opening of the GroEL channel. The polypeptide is Co-chaperonin GroES (Chlamydia pneumoniae (Chlamydophila pneumoniae)).